The chain runs to 119 residues: Large ribosomal subunit protein bL20 (119 aa).

Belongs to the bacterial ribosomal protein bL20 family.

Binds directly to 23S ribosomal RNA and is necessary for the in vitro assembly process of the 50S ribosomal subunit. It is not involved in the protein synthesizing functions of that subunit. This Thiobacillus denitrificans (strain ATCC 25259 / T1) protein is Large ribosomal subunit protein bL20.